The chain runs to 469 residues: 6-phospho-beta-galactosidase (469 aa).

5 residues coordinate D-galactose 6-phosphate: Gln19, His116, Asn159, Glu160, and Asn297. Glu160 serves as the catalytic Proton donor. Residue Glu375 is the Nucleophile of the active site. The D-galactose 6-phosphate site is built by Ser428, Trp429, Lys435, and Tyr437.

This sequence belongs to the glycosyl hydrolase 1 family.

The catalysed reaction is a 6-phospho-beta-D-galactoside + H2O = D-galactose 6-phosphate + an alcohol. The protein operates within carbohydrate metabolism; lactose degradation; D-galactose 6-phosphate and beta-D-glucose from lactose 6-phosphate: step 1/1. This is 6-phospho-beta-galactosidase from Streptococcus equi subsp. zooepidemicus (strain H70).